The primary structure comprises 343 residues: Ribosomal RNA small subunit methyltransferase C (343 aa).

This sequence belongs to the methyltransferase superfamily. RsmC family. In terms of assembly, monomer.

Its subcellular location is the cytoplasm. It catalyses the reaction guanosine(1207) in 16S rRNA + S-adenosyl-L-methionine = N(2)-methylguanosine(1207) in 16S rRNA + S-adenosyl-L-homocysteine + H(+). In terms of biological role, specifically methylates the guanine in position 1207 of 16S rRNA in the 30S particle. The polypeptide is Ribosomal RNA small subunit methyltransferase C (Escherichia coli (strain 55989 / EAEC)).